A 560-amino-acid polypeptide reads, in one-letter code: 2-succinyl-5-enolpyruvyl-6-hydroxy-3-cyclohexene-1-carboxylate synthase (560 aa).

Belongs to the TPP enzyme family. MenD subfamily. As to quaternary structure, homodimer. Requires Mg(2+) as cofactor. Mn(2+) is required as a cofactor. Thiamine diphosphate serves as cofactor.

It catalyses the reaction isochorismate + 2-oxoglutarate + H(+) = 5-enolpyruvoyl-6-hydroxy-2-succinyl-cyclohex-3-ene-1-carboxylate + CO2. Its pathway is quinol/quinone metabolism; 1,4-dihydroxy-2-naphthoate biosynthesis; 1,4-dihydroxy-2-naphthoate from chorismate: step 2/7. The protein operates within quinol/quinone metabolism; menaquinone biosynthesis. Catalyzes the thiamine diphosphate-dependent decarboxylation of 2-oxoglutarate and the subsequent addition of the resulting succinic semialdehyde-thiamine pyrophosphate anion to isochorismate to yield 2-succinyl-5-enolpyruvyl-6-hydroxy-3-cyclohexene-1-carboxylate (SEPHCHC). In Lactococcus lactis subsp. lactis (strain IL1403) (Streptococcus lactis), this protein is 2-succinyl-5-enolpyruvyl-6-hydroxy-3-cyclohexene-1-carboxylate synthase.